The primary structure comprises 219 residues: Thiamine-phosphate synthase (219 aa).

Residues Q44–K48 and N79 contribute to the 4-amino-2-methyl-5-(diphosphooxymethyl)pyrimidine site. Mg(2+) is bound by residues D80 and D99. S117 contacts 4-amino-2-methyl-5-(diphosphooxymethyl)pyrimidine. T143–T145 serves as a coordination point for 2-[(2R,5Z)-2-carboxy-4-methylthiazol-5(2H)-ylidene]ethyl phosphate. K146 serves as a coordination point for 4-amino-2-methyl-5-(diphosphooxymethyl)pyrimidine. 2-[(2R,5Z)-2-carboxy-4-methylthiazol-5(2H)-ylidene]ethyl phosphate is bound by residues G175 and I195–S196.

Belongs to the thiamine-phosphate synthase family. Mg(2+) serves as cofactor.

The catalysed reaction is 2-[(2R,5Z)-2-carboxy-4-methylthiazol-5(2H)-ylidene]ethyl phosphate + 4-amino-2-methyl-5-(diphosphooxymethyl)pyrimidine + 2 H(+) = thiamine phosphate + CO2 + diphosphate. The enzyme catalyses 2-(2-carboxy-4-methylthiazol-5-yl)ethyl phosphate + 4-amino-2-methyl-5-(diphosphooxymethyl)pyrimidine + 2 H(+) = thiamine phosphate + CO2 + diphosphate. It carries out the reaction 4-methyl-5-(2-phosphooxyethyl)-thiazole + 4-amino-2-methyl-5-(diphosphooxymethyl)pyrimidine + H(+) = thiamine phosphate + diphosphate. Its pathway is cofactor biosynthesis; thiamine diphosphate biosynthesis; thiamine phosphate from 4-amino-2-methyl-5-diphosphomethylpyrimidine and 4-methyl-5-(2-phosphoethyl)-thiazole: step 1/1. Its function is as follows. Condenses 4-methyl-5-(beta-hydroxyethyl)thiazole monophosphate (THZ-P) and 2-methyl-4-amino-5-hydroxymethyl pyrimidine pyrophosphate (HMP-PP) to form thiamine monophosphate (TMP). The chain is Thiamine-phosphate synthase from Bacillus thuringiensis subsp. konkukian (strain 97-27).